The following is a 258-amino-acid chain: Imidazole glycerol phosphate synthase subunit HisF (258 aa).

Residues aspartate 11 and aspartate 130 contribute to the active site.

This sequence belongs to the HisA/HisF family. As to quaternary structure, heterodimer of HisH and HisF.

It localises to the cytoplasm. The enzyme catalyses 5-[(5-phospho-1-deoxy-D-ribulos-1-ylimino)methylamino]-1-(5-phospho-beta-D-ribosyl)imidazole-4-carboxamide + L-glutamine = D-erythro-1-(imidazol-4-yl)glycerol 3-phosphate + 5-amino-1-(5-phospho-beta-D-ribosyl)imidazole-4-carboxamide + L-glutamate + H(+). It participates in amino-acid biosynthesis; L-histidine biosynthesis; L-histidine from 5-phospho-alpha-D-ribose 1-diphosphate: step 5/9. IGPS catalyzes the conversion of PRFAR and glutamine to IGP, AICAR and glutamate. The HisF subunit catalyzes the cyclization activity that produces IGP and AICAR from PRFAR using the ammonia provided by the HisH subunit. In Synechococcus sp. (strain CC9902), this protein is Imidazole glycerol phosphate synthase subunit HisF.